The following is a 125-amino-acid chain: Large ribosomal subunit protein bL12 (125 aa).

The protein belongs to the bacterial ribosomal protein bL12 family. In terms of assembly, homodimer. Part of the ribosomal stalk of the 50S ribosomal subunit. Forms a multimeric L10(L12)X complex, where L10 forms an elongated spine to which 2 to 4 L12 dimers bind in a sequential fashion. Binds GTP-bound translation factors.

Functionally, forms part of the ribosomal stalk which helps the ribosome interact with GTP-bound translation factors. Is thus essential for accurate translation. The sequence is that of Large ribosomal subunit protein bL12 from Thermus thermophilus (strain ATCC BAA-163 / DSM 7039 / HB27).